A 438-amino-acid chain; its full sequence is MINIRPDEISNIIRQQIESYDQEVQIDNVGTVLQVGDGIARVYGLEQVMAGELLEFEDKTVGIALNLENDNVGVVLMGPGLDILEGGSVRSTGKIAQIPVGDGFLGRVVDSLARPIDGKGDIDATESRLVESMAPGIITRKSVCEPVQTGITAIDSMIPIGRGQRELIIGDRQTGKTSVAIDTIINQKSEDVICVYVAIGQKASSVASIVTTLEEKGALGYTIVVASNADDPATLQYIAPYTGAALAEYFMYKGKATLIIYDDLSKQASAYRQMSLLLRRPPGREAYPGDVFYLHSRLLERAAKLSDALGGGSMTALPIIETQAGDVSAYIPTNVISITDGQIFLSGDLFNAGIRPAINVGISVSRVGSAAQTKAMKQVAGKLKLELAQFAELEAFSQFASDLDAATQAELARGQRLREMLKQPQNSPIPVEEQVALI.

170 to 177 (GDRQTGKT) is a binding site for ATP.

The protein belongs to the ATPase alpha/beta chains family. In terms of assembly, F-type ATPases have 2 components, CF(1) - the catalytic core - and CF(0) - the membrane proton channel. CF(1) has five subunits: alpha(3), beta(3), gamma(1), delta(1), epsilon(1). CF(0) has four main subunits: a, b, b' and c.

The protein localises to the plastid. The protein resides in the chloroplast thylakoid membrane. The catalysed reaction is ATP + H2O + 4 H(+)(in) = ADP + phosphate + 5 H(+)(out). In terms of biological role, produces ATP from ADP in the presence of a proton gradient across the membrane. The alpha chain is a regulatory subunit. The chain is ATP synthase subunit alpha, chloroplastic from Ochrosphaera neapolitana.